Reading from the N-terminus, the 951-residue chain is Plasma membrane ATPase (951 aa).

Transmembrane regions (helical) follow at residues 61-81, 93-113, 243-263, and 277-297; these read FLGFMWNPLSWVMEMAAIMAI, WEDFVGIIVLLVINSTISFIE, IGNFCICSIAVGIVIEIIVMF, and LLVLLIGGIPIAMPTVLSVTM. The active-site 4-aspartylphosphate intermediate is the Asp329. Mg(2+) is bound by residues Asp588 and Asp592. A run of 6 helical transmembrane segments spans residues 647 to 667, 671 to 691, 709 to 729, 752 to 772, 785 to 805, and 814 to 834; these read IYAVSITIRIVLGFLLIALIW, FSPFMVLIIAILNDGTIMTIS, IFATGIVLGSYLALMTVIFFW, EMMSALYLQVSIVSQALIFVT, LLLVTAFMLAQLVATFLAVYA, and GIGWGWAGVIWLYSIVFYFPL.

The protein belongs to the cation transport ATPase (P-type) (TC 3.A.3) family. Type IIIA subfamily.

It localises to the cell membrane. The catalysed reaction is ATP + H2O + H(+)(in) = ADP + phosphate + 2 H(+)(out). In terms of biological role, the plasma membrane ATPase of plants and fungi is a hydrogen ion pump. The proton gradient it generates drives the active transport of nutrients by H(+)-symport. The resulting external acidification and/or internal alkinization may mediate growth responses. The chain is Plasma membrane ATPase from Oryza sativa subsp. japonica (Rice).